A 392-amino-acid chain; its full sequence is Pannexin-3 (392 aa).

Over 1-39 (MSLAHTAAEYMLSDALLPDRRGSRLKGLRLELPLDKMVK) the chain is Cytoplasmic. Residues 40-60 (FITVGFPLLLMSLAFAQEFSS) form a helical membrane-spanning segment. The Extracellular portion of the chain corresponds to 61 to 113 (GSPISCFSPSNFSVRQAAYVDSSCWDSLAHHTQDKAGQYKVKSLWPHKALPYS). The N-linked (GlcNAc...) asparagine glycan is linked to asparagine 71. The chain crosses the membrane as a helical span at residues 114–134 (LLALAVAMYLPVLLWQYVAVP). Residues 135–215 (SLSSDLLFII…VATYLLRNAL (81 aa)) are Cytoplasmic-facing. Residues 216–236 (LLLFTSATYLYLGQFHLDVFF) form a helical membrane-spanning segment. At 237–267 (QDEFNCFIKTGLLHDETHVPELITCRLTSLS) the chain is on the extracellular side. The helical transmembrane segment at 268-288 (VFQIVSVSSAAIYTILVPVII) threads the bilayer. The Cytoplasmic segment spans residues 289–392 (YNLTRLCRWD…LTQHTYDEHA (104 aa)).

It belongs to the pannexin family. Homoheptameric. Post-translationally, N-glycosylation may play a role in cell surface targeting. Expressed in skin, cartilage, heart, lung, liver, spleen, thymus and kidney. Not expressed in brain. Expressed in calvarial cells.

Its subcellular location is the cell membrane. The protein localises to the endoplasmic reticulum membrane. The catalysed reaction is Ca(2+)(in) = Ca(2+)(out). The enzyme catalyses ATP(in) = ATP(out). Its function is as follows. Regulator of osteoblast differentiation by functionning as a Ca(2+) channel in the endoplasmic reticulum which regulates calmodulin (CaM) pathways. Allows ATP release into the extracellular space and activation or purinergic receptors. This Mus musculus (Mouse) protein is Pannexin-3 (Panx3).